The sequence spans 118 residues: Nitrogenase-stabilizing/protective protein NifW (118 aa).

It belongs to the NifW family. Homotrimer; associates with NifD.

Its function is as follows. May protect the nitrogenase Fe-Mo protein from oxidative damage. In Rhodopseudomonas palustris (strain BisB5), this protein is Nitrogenase-stabilizing/protective protein NifW.